Here is a 653-residue protein sequence, read N- to C-terminus: Probable syringafactin export ATP-binding/permease protein SyfD (653 aa).

The region spanning L6–T244 is the ABC transporter domain. Residue G42–S49 participates in ATP binding. Transmembrane regions (helical) follow at residues L252–S272, L278–G298, L526–M546, M583–F603, and L616–V636.

This sequence belongs to the ABC transporter superfamily. Macrolide exporter (TC 3.A.1.122) family. In terms of assembly, probably part of a tripartite efflux system, which is composed of an inner membrane transporter, a periplasmic membrane fusion protein, and an outer membrane component.

The protein localises to the cell inner membrane. Functionally, probably involved in the export of syringafactins. The polypeptide is Probable syringafactin export ATP-binding/permease protein SyfD (Pseudomonas syringae pv. syringae (strain B728a)).